The primary structure comprises 461 residues: D-phenylhydantoinase (461 aa).

A divalent metal cation is bound by residues H59, H61, and K151. Position 151 is an N6-carboxylysine (K151). Y156 contributes to the substrate binding site. 2 residues coordinate a divalent metal cation: H182 and H239. S286 contacts substrate. D313 contributes to the a divalent metal cation binding site. Substrate is bound at residue N335.

The protein belongs to the metallo-dependent hydrolases superfamily. Hydantoinase/dihydropyrimidinase family. As to quaternary structure, homotetramer. The cofactor is a divalent metal cation. In terms of processing, carboxylation allows a single lysine to coordinate two divalent metal cations.

It catalyses the reaction D-5-phenylhydantoin + H2O = N-carbamoyl-D-phenylglycine + H(+). Its function is as follows. Catalyzes the stereospecific hydrolysis of the cyclic amide bond of D-hydantoin derivatives with an aromatic side chains at the 5'-position. Has no activity on dihydropyrimidines. The physiological function is unknown. The chain is D-phenylhydantoinase from Escherichia coli O81 (strain ED1a).